A 425-amino-acid polypeptide reads, in one-letter code: CinA-like protein (425 aa).

This sequence belongs to the CinA family.

In Shewanella sp. (strain ANA-3), this protein is CinA-like protein.